The primary structure comprises 1013 residues: Ephrin type-B receptor 6 (1013 aa).

Residues 1–31 (MASENTAGSGSRVAGMVYSLWLLVLGPSVLA) form the signal peptide. The Extracellular portion of the chain corresponds to 32–590 (LEEVLLDTTG…LPEKLSLVIG (559 aa)). An Eph LBD domain is found at 33–231 (EEVLLDTTGE…FSYTCPSVLR (199 aa)). 2 Fibronectin type-III domains span residues 363 to 478 (PPSA…TSHE) and 479 to 574 (VPSA…TLPQ). N-linked (GlcNAc...) asparagine glycosylation is present at asparagine 472. Residues 591–611 (SILGALAFLLLAAITVLAVIF) traverse the membrane as a helical segment. Residues 612-1013 (QRKRRGTGYT…HLRQPGSVEV (402 aa)) lie on the Cytoplasmic side of the membrane. Residues 662–911 (IKIEEVIGAG…QLVAAFDKMI (250 aa)) enclose the Protein kinase domain. Residue 668–676 (IGAGSFGEV) coordinates ATP. Positions 940 to 1004 (PCLDSPQAWL…LHNIQLLQQH (65 aa)) constitute an SAM domain. A PDZ-binding motif is present at residues 1011–1013 (VEV).

Belongs to the protein kinase superfamily. Tyr protein kinase family. Ephrin receptor subfamily. As to quaternary structure, interacts with CBL and EPHB1. Interacts with FYN; this interaction takes place in a ligand-independent manner. Ligand-binding increases phosphorylation on tyrosine residues. Phosphorylation on tyrosine residues is mediated by transphosphorylation by the catalytically active EPHB1 in a ligand-independent manner. Tyrosine phosphorylation of the receptor may act as a switch on the functional transition from cell adhesion/attraction to de-adhesion/repulsion.

The protein resides in the membrane. In terms of biological role, kinase-defective receptor for members of the ephrin-B family. Binds to ephrin-B1 and ephrin-B2. Modulates cell adhesion and migration by exerting both positive and negative effects upon stimulation with ephrin-B2. Inhibits JNK activation, T-cell receptor-induced IL-2 secretion and CD25 expression upon stimulation with ephrin-B2. This is Ephrin type-B receptor 6 (Ephb6) from Rattus norvegicus (Rat).